Reading from the N-terminus, the 368-residue chain is MSTEPSVAKDAVLKRSEALAENTPQVSGYDFNEGLDYSKLFESYVNTGFQATNLGLAIREINRMLDCRDQPLEADQIDSHETDDFIRRRSKCTVFLGYTSNLVSSGLRETIRFLAEHRMIDCIVTTAGGVEEDFIKCLAPTFMGSFELSGRDLRERGINRIGNLLVPNDNYCKFEDWVMPLLDEMLEEQKSQGTIWSPSKIIHRLGERIGDPSSIYYWAAKNQIPVFCPALTDGSLGDMMYFHSFRQPGLVVDILSDLRRLNTMAVKAVNSGMIIVGGGVIKHHICNANLMRNGADYSVFINTASEFDGSDSGARPDEAISWGKIRKDATPVKVYAEASLVFPLIVGETFAKRHHCAGKELPRETNQV.

Residues 100-104 (SNLVS), 126-128 (TAG), glutamate 132, and aspartate 233 contribute to the NAD(+) site. Residue 131-132 (EE) coordinates spermidine. A spermidine-binding site is contributed by aspartate 238. Glycine 278 provides a ligand contact to NAD(+). Histidine 283 is a binding site for spermidine. 303–304 (TA) serves as a coordination point for NAD(+). Residues 309 to 311 (GSD) and 318 to 324 (EAISWGK) contribute to the spermidine site. Catalysis depends on lysine 324, which acts as the Nucleophile. Position 337–338 (337–338 (EA)) interacts with NAD(+).

It belongs to the deoxyhypusine synthase family. It depends on NAD(+) as a cofactor.

The enzyme catalyses [eIF5A protein]-L-lysine + spermidine = [eIF5A protein]-deoxyhypusine + propane-1,3-diamine. The protein operates within protein modification; eIF5A hypusination. Its function is as follows. Catalyzes the NAD-dependent oxidative cleavage of spermidine and the subsequent transfer of the butylamine moiety of spermidine to the epsilon-amino group of a specific lysine residue of the eIF-5A precursor protein to form the intermediate deoxyhypusine residue. In Drosophila melanogaster (Fruit fly), this protein is Probable deoxyhypusine synthase.